The following is a 267-amino-acid chain: Thymidylate synthase (267 aa).

Arginine 25 contacts dUMP. Histidine 55 is a binding site for (6R)-5,10-methylene-5,6,7,8-tetrahydrofolate. Residue 130-131 coordinates dUMP; sequence RR. Cysteine 150 serves as the catalytic Nucleophile. Residues 170 to 173, asparagine 181, and 211 to 213 each bind dUMP; these read RSAD and HIY. Residue aspartate 173 participates in (6R)-5,10-methylene-5,6,7,8-tetrahydrofolate binding. Alanine 266 provides a ligand contact to (6R)-5,10-methylene-5,6,7,8-tetrahydrofolate.

It belongs to the thymidylate synthase family. Bacterial-type ThyA subfamily. As to quaternary structure, homodimer.

Its subcellular location is the cytoplasm. The enzyme catalyses dUMP + (6R)-5,10-methylene-5,6,7,8-tetrahydrofolate = 7,8-dihydrofolate + dTMP. It functions in the pathway pyrimidine metabolism; dTTP biosynthesis. In terms of biological role, catalyzes the reductive methylation of 2'-deoxyuridine-5'-monophosphate (dUMP) to 2'-deoxythymidine-5'-monophosphate (dTMP) while utilizing 5,10-methylenetetrahydrofolate (mTHF) as the methyl donor and reductant in the reaction, yielding dihydrofolate (DHF) as a by-product. This enzymatic reaction provides an intracellular de novo source of dTMP, an essential precursor for DNA biosynthesis. In Corynebacterium efficiens (strain DSM 44549 / YS-314 / AJ 12310 / JCM 11189 / NBRC 100395), this protein is Thymidylate synthase.